A 333-amino-acid polypeptide reads, in one-letter code: MTNAATDKSVASVARDVSTGKPGKSPDAAVHLLSGGLAGLTSAVTLQPFDLLKTRLQQQHSETSKLTIAGEIRKLSQLKELWRGAVPSALRTSVGAGLYFTTLSKMRAAVAQYNHRDSSVTSVLPKLLPMENLATGFVARAIVGYITMPITMVKTRFESNIYSYRTMGESIVGIYKDIGPDGVVHRSSLLNFFKGSVATLARDCPYAGLYVLFYEGFKNDVLVKVIPESVTGSDSRSSVINSSSAILAASVSTTITAPFDAIKTRLQLTKETSILKTTGILLREDGGVFNLFRGLSLRFGRKALSAGISWCIYEELIKSDFSQCRLFNKERLA.

Residues 1–25 (MTNAATDKSVASVARDVSTGKPGKS) form a disordered region. 3 Solcar repeats span residues 26 to 109 (PDAA…MRAA), 127 to 220 (LLPM…FKND), and 236 to 319 (RSSV…LIKS). A run of 6 helical transmembrane segments spans residues 32 to 57 (LLSG…TRLQ), 84 to 110 (GAVP…RAAV), 133 to 158 (LATG…TRFE), 195 to 218 (GSVA…EGFK), 240 to 266 (INSS…KTRL), and 294 to 312 (GLSL…SWCI).

Belongs to the mitochondrial carrier (TC 2.A.29) family. SLC25A38 subfamily.

The protein localises to the mitochondrion inner membrane. The enzyme catalyses glycine(in) = glycine(out). Mitochondrial glycine transporter that imports glycine into the mitochondrial matrix. Plays an important role in providing glycine for the first enzymatic step in heme biosynthesis, the condensation of glycine with succinyl-CoA to produce 5-aminolevulinate (ALA) in the mitochondrial matrix. The polypeptide is Mitochondrial glycine transporter (Scheffersomyces stipitis (strain ATCC 58785 / CBS 6054 / NBRC 10063 / NRRL Y-11545) (Yeast)).